The following is a 142-amino-acid chain: Probable transport accessory protein MmpS1 (142 aa).

2 consecutive transmembrane segments (helical) span residues F8 to L28 and V81 to A101.

The protein belongs to the MmpS family.

The protein resides in the cell membrane. In Mycobacterium bovis (strain ATCC BAA-935 / AF2122/97), this protein is Probable transport accessory protein MmpS1 (mmpS1).